The sequence spans 323 residues: Protein REDOX 2 (323 aa).

NADP(+) is bound at residue aspartate 53. Tyrosine 58 (proton donor) is an active-site residue. Residue histidine 121 participates in substrate binding. NADP(+) contacts are provided by residues 167–168, glutamine 189, 215–220, and 289–297; these read SN, WSPLLS, and DQIHEIPQR. The interval 302–323 is disordered; the sequence is GEEFMHPEGPIKSPEELWDGDL.

The protein belongs to the aldo/keto reductase family. Monomer. Expressed in leaf epidermis.

It catalyses the reaction 15alpha-stemmadenine + NADP(+) = 17-dehydrostemmadenine + NADPH + 2 H(+). It functions in the pathway alkaloid biosynthesis. Its function is as follows. Component of iboga and aspidosperma monoterpenoid indole alkaloids (MIAs, e.g. tabersonine and catharanthine) biosynthesis pathway from 19E-geissoschizine. Catalyzes the second oxidation step of the unstable intermediate product resulting from the reaction triggered by the geissoschizine oxidase (GO) in the stemmadenine biosynthesis process from 19E-geissoschizine. The polypeptide is Protein REDOX 2 (Catharanthus roseus (Madagascar periwinkle)).